The following is a 189-amino-acid chain: UPF0301 protein PFL_5830 (189 aa).

It belongs to the UPF0301 (AlgH) family.

This is UPF0301 protein PFL_5830 from Pseudomonas fluorescens (strain ATCC BAA-477 / NRRL B-23932 / Pf-5).